A 643-amino-acid chain; its full sequence is Ecto-NOX disulfide-thiol exchanger 1 (643 aa).

Residues Lys-142 to Ala-221 form the RRM domain. Coiled coils occupy residues Val-307–Ile-342 and Gln-425–Leu-570.

Belongs to the ENOX family. The cofactor is Cu cation. As to expression, expressed in lymphocyte cells, breast and breast cancer (at protein level). Found in the sera of cancer patients with a wide variety of cancers including breast, prostate, lung and ovarian cancers, leukemias, and lymphomas. Found also in the serum of healthy volunteers or patients with disorders other than cancer. Probably shed into serum by cancer cells.

The protein resides in the cell membrane. It localises to the secreted. It is found in the extracellular space. Not inhibited by the antitumor sulfonylurea LY181984, the vabilloid capsaicin, and retinoids. In terms of biological role, probably acts as a terminal oxidase of plasma electron transport from cytosolic NAD(P)H via hydroquinones to acceptors at the cell surface. Hydroquinone oxidase activity alternates with a protein disulfide-thiol interchange/oxidoreductase activity which may control physical membrane displacements associated with vesicle budding or cell enlargement. The activities oscillate with a period length of 24 minutes and play a role in control of the ultradian cellular biological clock. The protein is Ecto-NOX disulfide-thiol exchanger 1 (ENOX1) of Homo sapiens (Human).